Reading from the N-terminus, the 720-residue chain is B3 domain-containing transcription factor ABI3 (720 aa).

2 disordered regions span residues 122–146 (RSDG…SSGA) and 324–360 (FQQD…PPQQ). The span at 129 to 146 (TPNQNQYASGNCDDSSGA) shows a compositional bias: polar residues. Over residues 324-344 (FQQDPFQNPNPNNNNLIPPSD) the composition is skewed to low complexity. Positions 572 to 674 (LQKVLKQSDV…KYLIRGVKVR (103 aa)) form a DNA-binding region, TF-B3. The tract at residues 675–720 (QPSGQKPEAPPSSAATKRQNKSQRNINNNSPSANVVVASPTSQTVK) is disordered. Over residues 687–700 (SAATKRQNKSQRNI) the composition is skewed to polar residues. The span at 701–714 (NNNSPSANVVVASP) shows a compositional bias: low complexity.

Interacts (via C-terminus) with SPK1, SCAR3, ABI5, APRR1, AIP2, AIP3 and AIP4. Binds to BZIP10 and BZIP25 and forms complexes made of ABI3, BZIP53 and BZIP25 or BZIP10. In terms of processing, ubiquitinated by AIP2. Ubiquitination probably leads to its subsequent degradation, thus negatively regulating ABA signaling. As to expression, isoform 2 accumulates only at the end of seed maturation.

It is found in the nucleus. It localises to the cytoplasm. Its function is as follows. Participates in abscisic acid-regulated gene expression during seed development. Regulates the transcription of SGR1 and SGR2 that are involved in leaf and embryo degreening. The chain is B3 domain-containing transcription factor ABI3 (ABI3) from Arabidopsis thaliana (Mouse-ear cress).